A 260-amino-acid polypeptide reads, in one-letter code: NAD-capped RNA hydrolase NudC (260 aa).

R69 provides a ligand contact to substrate. Residues C98 and C101 each contribute to the Zn(2+) site. E111 serves as a coordination point for substrate. C116 and C119 together coordinate Zn(2+). A substrate-binding site is contributed by Y124. The Nudix hydrolase domain maps to 125-248 (PQIAPCIIVA…TVARRLIEDT (124 aa)). A divalent metal cation-binding residues include A158, E174, and E178. The Nudix box motif lies at 159–180 (GFVEVGETLEQTVVREVMEESQ). Position 192-199 (192-199 (QPWPFPHS)) interacts with substrate. Position 219 (E219) interacts with a divalent metal cation. A241 serves as a coordination point for substrate.

The protein belongs to the Nudix hydrolase family. NudC subfamily. Homodimer. The cofactor is Mg(2+). Mn(2+) is required as a cofactor. Zn(2+) serves as cofactor.

The catalysed reaction is a 5'-end NAD(+)-phospho-ribonucleoside in mRNA + H2O = a 5'-end phospho-adenosine-phospho-ribonucleoside in mRNA + beta-nicotinamide D-ribonucleotide + 2 H(+). The enzyme catalyses NAD(+) + H2O = beta-nicotinamide D-ribonucleotide + AMP + 2 H(+). It carries out the reaction NADH + H2O = reduced beta-nicotinamide D-ribonucleotide + AMP + 2 H(+). Its function is as follows. mRNA decapping enzyme that specifically removes the nicotinamide adenine dinucleotide (NAD) cap from a subset of mRNAs by hydrolyzing the diphosphate linkage to produce nicotinamide mononucleotide (NMN) and 5' monophosphate mRNA. The NAD-cap is present at the 5'-end of some mRNAs and stabilizes RNA against 5'-processing. Has preference for mRNAs with a 5'-end purine. Catalyzes the hydrolysis of a broad range of dinucleotide pyrophosphates. This is NAD-capped RNA hydrolase NudC from Pectobacterium atrosepticum (strain SCRI 1043 / ATCC BAA-672) (Erwinia carotovora subsp. atroseptica).